Reading from the N-terminus, the 292-residue chain is Porphobilinogen deaminase (292 aa).

The residue at position 235 (C235) is an S-(dipyrrolylmethanemethyl)cysteine.

This sequence belongs to the HMBS family. Monomer. It depends on dipyrromethane as a cofactor.

The enzyme catalyses 4 porphobilinogen + H2O = hydroxymethylbilane + 4 NH4(+). It participates in porphyrin-containing compound metabolism; protoporphyrin-IX biosynthesis; coproporphyrinogen-III from 5-aminolevulinate: step 2/4. Its function is as follows. Tetrapolymerization of the monopyrrole PBG into the hydroxymethylbilane pre-uroporphyrinogen in several discrete steps. The sequence is that of Porphobilinogen deaminase from Acetivibrio thermocellus (strain ATCC 27405 / DSM 1237 / JCM 9322 / NBRC 103400 / NCIMB 10682 / NRRL B-4536 / VPI 7372) (Clostridium thermocellum).